The following is a 620-amino-acid chain: UDP-glucose:protein N-beta-glucosyltransferase (620 aa).

The protein belongs to the glycosyltransferase 41 family. Requires Does not require a metal cofactor. as cofactor.

It localises to the cytoplasm. The enzyme catalyses L-asparaginyl-[protein] + UDP-alpha-D-glucose = N(4)-(beta-D-glucosyl)-L-asparaginyl-[protein] + UDP + H(+). Its pathway is protein modification; protein glycosylation. In terms of biological role, inverting glycosyltransferase that catalyzes the transfer of one glucose moiety from UDP-glucose to an asparagine residue in peptides and proteins containing the NX(S/T) motif, resulting in their modification with a beta-linked 1,N-glucose. Likely acts as a key component of a general protein glycosylation system. Also accepts UDP-galactose as a substrate donor, albeit with low efficiency. Cannot use UDP-GlcNAc or UDP-GalNAc as substrate donor. In Actinobacillus pleuropneumoniae serotype 7 (strain AP76), this protein is UDP-glucose:protein N-beta-glucosyltransferase.